We begin with the raw amino-acid sequence, 616 residues long: Chaperone protein HscA (616 aa).

Belongs to the heat shock protein 70 family.

Its function is as follows. Chaperone involved in the maturation of iron-sulfur cluster-containing proteins. Has a low intrinsic ATPase activity which is markedly stimulated by HscB. Involved in the maturation of IscU. This is Chaperone protein HscA from Salmonella paratyphi A (strain ATCC 9150 / SARB42).